Here is a 171-residue protein sequence, read N- to C-terminus: MTIRFADKADCAAITEIYNHAVLHTAAIWNDRTVDTDNRLAWYEARQLLGYPVLVSEENGVVTGYASFGDWRSFDGFRYTVEHSVYVHPAHQGKGLGRKLLSRLIDEARRCGKHVMVAGIESQNAASIRLHHSLGFTVTAQMPQVGVKFGRWLDLTFMQLQLDEHAAPDAC.

One can recognise an N-acetyltransferase domain in the interval 1–163 (MTIRFADKAD…DLTFMQLQLD (163 aa)). Residues 72-74 (RSF) and 82-84 (EHS) each bind substrate. Residues 85–87 (VYV), 93–98 (GKGLGR), Asn-124, and Ser-133 contribute to the acetyl-CoA site.

As to quaternary structure, homodimer.

The enzyme catalyses L-methionine sulfoximine + acetyl-CoA = N-acetyl-L-methionine sulfoximine + CoA + H(+). It carries out the reaction L-methionine sulfone + acetyl-CoA = N-acetyl-L-methionine sulfone + CoA + H(+). Plays a role in the resistance against the toxic effects of L-methionine sulfoximine (MSX), a rare amino acid which inhibits glutamine synthetase (GlnA). Catalyzes the acetylation of MSX. It can also use L-methionine sulfone (MSO). Also catalyzes the acylation of free L-amino acids using an acyl-CoA as acyl donor. The sequence is that of L-methionine sulfoximine/L-methionine sulfone acetyltransferase (yncA) from Salmonella typhimurium (strain LT2 / SGSC1412 / ATCC 700720).